The chain runs to 3147 residues: Probable polyketide synthase 1 (3147 aa).

The 446-residue stretch at 12–457 (SSDVAVIGVG…GSNCHLIIQE (446 aa)) folds into the Ketosynthase family 3 (KS3) domain. Active-site for beta-ketoacyl synthase activity residues include Cys180 and His319. Residues 345-369 (QLNNFSTDGNDNDDDDDDNTSPEPL) form a disordered region. A compositionally biased stretch (acidic residues) spans 354 to 364 (NDNDDDDDDNT). His380 functions as the For beta-ketoacyl synthase activity in the catalytic mechanism. The acyl/malonyl transferase stretch occupies residues 672 to 705 (GIYPSISVGHSFGEVSSYYLSGIISLETACKIVY). The For acyl/malonyl transferase activity role is filled by Ser682. The segment at 976 to 1127 (NRLEGPTTSL…ATISLEQQQP (152 aa)) is N-terminal hotdog fold. A PKS/mFAS DH domain is found at 976 to 1298 (NRLEGPTTSL…IKSTNPKSTK (323 aa)). The active-site Proton acceptor; for dehydratase activity is His1014. The C-terminal hotdog fold stretch occupies residues 1149–1298 (DISKLDKFEL…IKSTNPKSTK (150 aa)). Catalysis depends on Asp1209, which acts as the Proton donor; for dehydratase activity. The Carrier domain occupies 2568 to 2645 (SSNISLQDKI…SFLEKVNGLS (78 aa)). Ser2605 is modified (O-(pantetheine 4'-phosphoryl)serine). A disordered region spans residues 2723–2747 (PSLSQSDVLKTPPIKSLNNTKNSSL). Residues 2738 to 2747 (SLNNTKNSSL) show a composition bias toward polar residues. Residues 2789–3147 (VLGIGISVPG…FEGCFLKNVV (359 aa)) are chalcone synthase. Residue Cys2930 is part of the active site.

In the C-terminal section; belongs to the thiolase-like superfamily. Chalcone/stilbene synthases family. Homodimer. Requires pantetheine 4'-phosphate as cofactor.

The enzyme catalyses (E)-4-coumaroyl-CoA + 3 malonyl-CoA + 3 H(+) = 2',4,4',6'-tetrahydroxychalcone + 3 CO2 + 4 CoA. It functions in the pathway secondary metabolite biosynthesis; flavonoid biosynthesis. In terms of biological role, probable polyketide synthase. Produces only acylpyrones; in vitro. In Dictyostelium discoideum (Social amoeba), this protein is Probable polyketide synthase 1 (stlA).